The following is a 641-amino-acid chain: Chaperone protein DnaK (641 aa).

Thr199 carries the phosphothreonine; by autocatalysis modification. A disordered region spans residues 602–641; the sequence is MYADQADQAQQAGGQEEGQAKSADDAVDAEFEEVKDDDKK. Positions 604–615 are enriched in low complexity; that stretch reads ADQADQAQQAGG. A compositionally biased stretch (acidic residues) spans 626–641; sequence DAVDAEFEEVKDDDKK.

Belongs to the heat shock protein 70 family.

Its function is as follows. Acts as a chaperone. The protein is Chaperone protein DnaK of Marinobacter nauticus (strain ATCC 700491 / DSM 11845 / VT8) (Marinobacter aquaeolei).